The sequence spans 264 residues: Thiazole synthase (264 aa).

The active-site Schiff-base intermediate with DXP is Lys-100. 1-deoxy-D-xylulose 5-phosphate contacts are provided by residues Gly-161, 187–188, and 209–210; these read AG and NT.

It belongs to the ThiG family. In terms of assembly, homotetramer. Forms heterodimers with either ThiH or ThiS.

The protein localises to the cytoplasm. The catalysed reaction is [ThiS sulfur-carrier protein]-C-terminal-Gly-aminoethanethioate + 2-iminoacetate + 1-deoxy-D-xylulose 5-phosphate = [ThiS sulfur-carrier protein]-C-terminal Gly-Gly + 2-[(2R,5Z)-2-carboxy-4-methylthiazol-5(2H)-ylidene]ethyl phosphate + 2 H2O + H(+). It participates in cofactor biosynthesis; thiamine diphosphate biosynthesis. Functionally, catalyzes the rearrangement of 1-deoxy-D-xylulose 5-phosphate (DXP) to produce the thiazole phosphate moiety of thiamine. Sulfur is provided by the thiocarboxylate moiety of the carrier protein ThiS. In vitro, sulfur can be provided by H(2)S. The protein is Thiazole synthase of Nitrosospira multiformis (strain ATCC 25196 / NCIMB 11849 / C 71).